A 61-amino-acid polypeptide reads, in one-letter code: Photosystem II reaction center protein K (61 aa).

The propeptide occupies 1-24 (MLNIFNLICICFNSALFSSSFLFA). A helical membrane pass occupies residues 36-56 (IVDFMPVIPVLFFLLAFVWQA).

This sequence belongs to the PsbK family. In terms of assembly, PSII is composed of 1 copy each of membrane proteins PsbA, PsbB, PsbC, PsbD, PsbE, PsbF, PsbH, PsbI, PsbJ, PsbK, PsbL, PsbM, PsbT, PsbX, PsbY, PsbZ, Psb30/Ycf12, at least 3 peripheral proteins of the oxygen-evolving complex and a large number of cofactors. It forms dimeric complexes.

It is found in the plastid. Its subcellular location is the chloroplast thylakoid membrane. One of the components of the core complex of photosystem II (PSII). PSII is a light-driven water:plastoquinone oxidoreductase that uses light energy to abstract electrons from H(2)O, generating O(2) and a proton gradient subsequently used for ATP formation. It consists of a core antenna complex that captures photons, and an electron transfer chain that converts photonic excitation into a charge separation. In Gossypium barbadense (Sea Island cotton), this protein is Photosystem II reaction center protein K.